Reading from the N-terminus, the 74-residue chain is Putative Fe(2+) transport protein A (74 aa).

This sequence belongs to the FeoA family.

Its function is as follows. Might be involved in Fe(2+) ion uptake. This is Putative Fe(2+) transport protein A from Campylobacter jejuni subsp. jejuni serotype O:2 (strain ATCC 700819 / NCTC 11168).